The primary structure comprises 122 residues: Neutral phospholipase A2 agkistrodotoxin (122 aa).

Disulfide bonds link Cys26–Cys115, Cys28–Cys44, Cys43–Cys95, Cys49–Cys122, Cys50–Cys88, Cys57–Cys81, and Cys75–Cys86. Residues Tyr27, Gly29, and Gly31 each coordinate Ca(2+). His47 is a catalytic residue. Asp48 lines the Ca(2+) pocket. The active site involves Asp89.

The cofactor is Ca(2+). Expressed by the venom gland.

It is found in the secreted. It carries out the reaction a 1,2-diacyl-sn-glycero-3-phosphocholine + H2O = a 1-acyl-sn-glycero-3-phosphocholine + a fatty acid + H(+). Its function is as follows. Snake venom phospholipase A2 (PLA2) that inhibits neuromuscular transmission by blocking acetylcholine release from the nerve termini. PLA2 catalyzes the calcium-dependent hydrolysis of the 2-acyl groups in 3-sn-phosphoglycerides. The sequence is that of Neutral phospholipase A2 agkistrodotoxin from Gloydius halys (Chinese water mocassin).